The sequence spans 647 residues: RAF proto-oncogene serine/threonine-protein kinase (647 aa).

The residue at position 43 (Ser-43) is a Phosphoserine. One can recognise an RBD domain in the interval 56 to 131 (NTIRVFLPNK…IGEELQVDFL (76 aa)). The segment at 138–184 (THNFARKTFLKLAFCDICQKFLLNGFRCQTCGYKFHEHCSTKVPTMC) adopts a Phorbol-ester/DAG-type zinc-finger fold. Disordered regions lie at residues 236–269 (HVFT…VSTT) and 284–334 (HSES…RPRG). Over residues 239 to 269 (TFNTSNPSSEGTLSQRQRSTSTPNVHMVSTT) the composition is skewed to polar residues. Ser-259 is modified (phosphoserine). Thr-268 is subject to Phosphothreonine; by autocatalysis. The segment covering 286–297 (ESASPSALSGSP) has biased composition (low complexity). The segment covering 298 to 309 (NNMSPTGWSQPK) has biased composition (polar residues). At Ser-338 the chain carries Phosphoserine. A Protein kinase domain is found at 349–609 (VMLSTRIGSG…PQILSSIELL (261 aa)). ATP-binding positions include 355 to 363 (IGSGSFGTV) and Lys-375. The active-site Proton acceptor is Asp-468. 2 positions are modified to phosphoserine: Ser-499 and Ser-621.

The protein belongs to the protein kinase superfamily. TKL Ser/Thr protein kinase family. RAF subfamily. In terms of processing, phosphorylation at Ser-259 inactivates kinase activity. Dephosphorylation of Ser-259 by a complex containing protein phosphatase 1 relieves inactivation, leading to stimulate RAF1 activity. In terms of tissue distribution, isoform 1 was present in all tissues tested: skeletal muscle, intestine, brain, gizzard, heart, lung, kidney, bone marrow, spleen and bursa of Fabricius. Isoform 2 was only detected in brain, heart and skeletal muscle. In brain and heart isoform 1 is more abundant than isoform 2. In skeletal muscle isoform 2 is more abundant than isoform 1.

The protein resides in the cytoplasm. It is found in the cell membrane. It catalyses the reaction L-seryl-[protein] + ATP = O-phospho-L-seryl-[protein] + ADP + H(+). It carries out the reaction L-threonyl-[protein] + ATP = O-phospho-L-threonyl-[protein] + ADP + H(+). In terms of biological role, serine/threonine-protein kinase that acts as a regulatory link between the membrane-associated Ras GTPases and the MAPK/ERK cascade, and this critical regulatory link functions as a switch determining cell fate decisions. RAF1 activation initiates a mitogen-activated protein kinase (MAPK) cascade that comprises a sequential phosphorylation of the dual-specific MAPK kinases (MAP2K1/MEK1 and MAP2K2/MEK2) and the extracellular signal-regulated kinases (MAPK3/ERK1 and MAPK1/ERK2). This chain is RAF proto-oncogene serine/threonine-protein kinase (RAF1), found in Gallus gallus (Chicken).